A 206-amino-acid polypeptide reads, in one-letter code: Probable NAD(+) phosphorylase Rv3189 (206 aa).

The protein belongs to the MbcT/ParT/Res family. Forms a heterotetramer with cognate antitoxin Rv3188.

It catalyses the reaction phosphate + NAD(+) = ADP-alpha-D-ribose 1''-phosphate + nicotinamide + H(+). Functionally, probable toxic component of a type II toxin-antitoxin (TA) system. Degrades NAD(+) by phosphorolysis. Neutralized by its cognate antitoxin Rv3188. The sequence is that of Probable NAD(+) phosphorylase Rv3189 from Mycobacterium tuberculosis (strain ATCC 25618 / H37Rv).